A 253-amino-acid polypeptide reads, in one-letter code: Ribosomal RNA small subunit methyltransferase J (253 aa).

S-adenosyl-L-methionine contacts are provided by residues 98 to 99, 114 to 115, 150 to 151, and aspartate 172; these read RD, ER, and SS.

It belongs to the methyltransferase superfamily. RsmJ family.

It is found in the cytoplasm. It catalyses the reaction guanosine(1516) in 16S rRNA + S-adenosyl-L-methionine = N(2)-methylguanosine(1516) in 16S rRNA + S-adenosyl-L-homocysteine + H(+). Functionally, specifically methylates the guanosine in position 1516 of 16S rRNA. The protein is Ribosomal RNA small subunit methyltransferase J of Shewanella pealeana (strain ATCC 700345 / ANG-SQ1).